Consider the following 140-residue polypeptide: ATP synthase epsilon chain (140 aa).

It belongs to the ATPase epsilon chain family. In terms of assembly, F-type ATPases have 2 components, CF(1) - the catalytic core - and CF(0) - the membrane proton channel. CF(1) has five subunits: alpha(3), beta(3), gamma(1), delta(1), epsilon(1). CF(0) has three main subunits: a, b and c.

It localises to the cell inner membrane. Produces ATP from ADP in the presence of a proton gradient across the membrane. The protein is ATP synthase epsilon chain of Legionella pneumophila (strain Lens).